Here is a 419-residue protein sequence, read N- to C-terminus: UDP-N-acetylglucosamine 1-carboxyvinyltransferase (419 aa).

22 to 23 (KN) contributes to the phosphoenolpyruvate binding site. Residue Arg93 coordinates UDP-N-acetyl-alpha-D-glucosamine. The active-site Proton donor is the Cys117. A 2-(S-cysteinyl)pyruvic acid O-phosphothioketal modification is found at Cys117. Positions 307 and 329 each coordinate UDP-N-acetyl-alpha-D-glucosamine.

This sequence belongs to the EPSP synthase family. MurA subfamily.

It localises to the cytoplasm. It catalyses the reaction phosphoenolpyruvate + UDP-N-acetyl-alpha-D-glucosamine = UDP-N-acetyl-3-O-(1-carboxyvinyl)-alpha-D-glucosamine + phosphate. It participates in cell wall biogenesis; peptidoglycan biosynthesis. Its function is as follows. Cell wall formation. Adds enolpyruvyl to UDP-N-acetylglucosamine. The protein is UDP-N-acetylglucosamine 1-carboxyvinyltransferase of Shewanella baltica (strain OS195).